Consider the following 263-residue polypeptide: 3-deoxy-manno-octulosonate cytidylyltransferase (263 aa).

Belongs to the KdsB family.

Its subcellular location is the cytoplasm. The enzyme catalyses 3-deoxy-alpha-D-manno-oct-2-ulosonate + CTP = CMP-3-deoxy-beta-D-manno-octulosonate + diphosphate. It functions in the pathway nucleotide-sugar biosynthesis; CMP-3-deoxy-D-manno-octulosonate biosynthesis; CMP-3-deoxy-D-manno-octulosonate from 3-deoxy-D-manno-octulosonate and CTP: step 1/1. Its pathway is bacterial outer membrane biogenesis; lipopolysaccharide biosynthesis. In terms of biological role, activates KDO (a required 8-carbon sugar) for incorporation into bacterial lipopolysaccharide in Gram-negative bacteria. This Burkholderia vietnamiensis (strain G4 / LMG 22486) (Burkholderia cepacia (strain R1808)) protein is 3-deoxy-manno-octulosonate cytidylyltransferase.